The sequence spans 548 residues: Non-structural protein NS1 (548 aa).

This sequence belongs to the orbivirus non-structural protein NS1 family.

The chain is Non-structural protein NS1 (Segment-5) from Camelus dromedarius (Dromedary).